A 350-amino-acid polypeptide reads, in one-letter code: sn-1 oleoyl-lipid 12-desaturase (350 aa).

Helical transmembrane passes span 41-61 (AWTQALLSVVMVGLGYWSLAI) and 64-84 (WFLLPIAWIFTGTALTGFFVI). The short motif at 86-90 (HDCGH) is the Histidine box-1 element. Residues 98 to 118 (WVNDLVGHIFMMPLIYPFHSW) traverse the membrane as a helical segment. The Histidine box-2 motif lies at 122–126 (HNHHH). 2 helical membrane passes run 196–216 (VAVVVLFAAVAFPTLIATTGI) and 219–239 (FVKFWFVPWLGYHFWMSTFTI). A Histidine box-3 motif is present at residues 287–291 (HHLST).

The protein belongs to the fatty acid desaturase type 2 family. Requires Fe(2+) as cofactor.

The protein resides in the membrane. It catalyses the reaction a 1-[(9Z)-octadecenoyl]-2-acyl-glycerolipid + 2 reduced [2Fe-2S]-[ferredoxin] + O2 + 2 H(+) = a 1-[(9Z,12Z)-octadecdienoyl]-2-acyl-glycerolipid + 2 oxidized [2Fe-2S]-[ferredoxin] + 2 H2O. Its pathway is lipid metabolism; polyunsaturated fatty acid biosynthesis. Its function is as follows. Desaturase involved in fatty acid biosynthesis. Introduces a double bond at carbon 12 of oleoyl groups (18:1) attached to the sn-1 position of the glycerol moiety of membrane glycerolipids. This is sn-1 oleoyl-lipid 12-desaturase from Anabaena variabilis.